A 269-amino-acid chain; its full sequence is Ubiquinone/menaquinone biosynthesis C-methyltransferase UbiE (269 aa).

Residues Thr-92, Asp-113, and 141–142 (NA) each bind S-adenosyl-L-methionine.

The protein belongs to the class I-like SAM-binding methyltransferase superfamily. MenG/UbiE family.

The enzyme catalyses a 2-demethylmenaquinol + S-adenosyl-L-methionine = a menaquinol + S-adenosyl-L-homocysteine + H(+). The catalysed reaction is a 2-methoxy-6-(all-trans-polyprenyl)benzene-1,4-diol + S-adenosyl-L-methionine = a 5-methoxy-2-methyl-3-(all-trans-polyprenyl)benzene-1,4-diol + S-adenosyl-L-homocysteine + H(+). The protein operates within quinol/quinone metabolism; menaquinone biosynthesis; menaquinol from 1,4-dihydroxy-2-naphthoate: step 2/2. Its pathway is cofactor biosynthesis; ubiquinone biosynthesis. Functionally, methyltransferase required for the conversion of demethylmenaquinol (DMKH2) to menaquinol (MKH2) and the conversion of 2-polyprenyl-6-methoxy-1,4-benzoquinol (DDMQH2) to 2-polyprenyl-3-methyl-6-methoxy-1,4-benzoquinol (DMQH2). In Brucella suis biovar 1 (strain 1330), this protein is Ubiquinone/menaquinone biosynthesis C-methyltransferase UbiE.